The following is a 309-amino-acid chain: Wall-associated proteinase (309 aa).

N-linked (GlcNAc...) asparagine glycans are attached at residues Asn-190 and Asn-295.

It localises to the secreted. The protein localises to the cell wall. It is found in the membrane. Functionally, may participate in wall plasticization and/or intussusception or in cell wall turnover. The polypeptide is Wall-associated proteinase (Coccidioides immitis (strain RS) (Valley fever fungus)).